Consider the following 148-residue polypeptide: Large ribosomal subunit protein bL9 (148 aa).

Belongs to the bacterial ribosomal protein bL9 family.

Its function is as follows. Binds to the 23S rRNA. The sequence is that of Large ribosomal subunit protein bL9 from Stutzerimonas stutzeri (strain A1501) (Pseudomonas stutzeri).